A 329-amino-acid polypeptide reads, in one-letter code: Small ribosomal subunit protein uS2 (329 aa).

Belongs to the universal ribosomal protein uS2 family.

The sequence is that of Small ribosomal subunit protein uS2 from Bradyrhizobium sp. (strain ORS 278).